We begin with the raw amino-acid sequence, 88 residues long: Small ribosomal subunit protein bS20 (88 aa).

Over residues 1–10 the composition is skewed to basic residues; sequence MANHKSSLKR. Residues 1-24 form a disordered region; that stretch reads MANHKSSLKRAKQDIVRNTRNKSR.

The protein belongs to the bacterial ribosomal protein bS20 family.

Functionally, binds directly to 16S ribosomal RNA. The chain is Small ribosomal subunit protein bS20 from Desulfosudis oleivorans (strain DSM 6200 / JCM 39069 / Hxd3) (Desulfococcus oleovorans).